A 296-amino-acid polypeptide reads, in one-letter code: Ribonuclease HIII (296 aa).

In terms of domain architecture, RNase H type-2 spans 80–296; the sequence is LALIGSDEVG…NTKKAYQRLK (217 aa). Residues aspartate 86, glutamate 87, and aspartate 191 each coordinate a divalent metal cation.

Belongs to the RNase HII family. RnhC subfamily. Mn(2+) is required as a cofactor. It depends on Mg(2+) as a cofactor.

The protein resides in the cytoplasm. The enzyme catalyses Endonucleolytic cleavage to 5'-phosphomonoester.. Functionally, endonuclease that specifically degrades the RNA of RNA-DNA hybrids. This is Ribonuclease HIII from Streptococcus thermophilus (strain ATCC BAA-250 / LMG 18311).